The sequence spans 400 residues: Vitamin K-dependent protein Z (400 aa).

Residues 1-23 form the signal peptide; the sequence is MAGCVPLLQGLVLVLALHRVEPS. A propeptide spanning residues 24–40 is cleaved from the precursor; sequence VFLPASKANDVLVRWKR. The region spanning 41 to 86 is the Gla domain; it reads AGSYLLEELFEGNLEKECYEEICVYEEAREVFENEVVTDEFWRRYK. E47, E48, E51, E55, E57, E60, E61, E66, E67, E70, E73, E75, and E80 each carry 4-carboxyglutamate. A disulfide bridge connects residues C58 and C63. EGF-like domains follow at residues 87–123 and 125–166; these read GGSP…SNCE and AKNE…KQCV. 7 disulfide bridges follow: C91–C102, C96–C111, C113–C122, C129–C141, C137–C150, C152–C165, and C203–C219. The O-linked (Glc...) serine glycan is linked to S93. N99 carries N-linked (GlcNAc...) asparagine glycosylation. D104 is subject to (3R)-3-hydroxyaspartate. Residues 175–400 enclose the Peptidase S1 domain; sequence VLTSEKRAPD…YSLWFKQIMN (226 aa). N-linked (GlcNAc...) asparagine glycans are attached at residues N225, N233, N306, and N332. Cysteines 327 and 341 form a disulfide.

It belongs to the peptidase S1 family. Interacts with SERPINA10. Post-translationally, the iron and 2-oxoglutarate dependent 3-hydroxylation of aspartate and asparagine is (R) stereospecific within EGF domains. Plasma.

Its subcellular location is the secreted. Appears to assist hemostasis by binding thrombin and promoting its association with phospholipid vesicles. Inhibits activity of the coagulation protease factor Xa in the presence of SERPINA10, calcium and phospholipids. This is Vitamin K-dependent protein Z (PROZ) from Homo sapiens (Human).